The primary structure comprises 118 residues: Hydrogenase maturation factor HypA (118 aa).

Histidine 2 contributes to the Ni(2+) binding site. Zn(2+) is bound by residues cysteine 73, cysteine 76, cysteine 89, and cysteine 92.

Belongs to the HypA/HybF family.

Functionally, involved in the maturation of [NiFe] hydrogenases. Required for nickel insertion into the metal center of the hydrogenase. This Shewanella oneidensis (strain ATCC 700550 / JCM 31522 / CIP 106686 / LMG 19005 / NCIMB 14063 / MR-1) protein is Hydrogenase maturation factor HypA.